Reading from the N-terminus, the 361-residue chain is Peroxidase A (361 aa).

Belongs to the peroxidase family. Partially N-glycosylated.

The protein localises to the secreted. The catalysed reaction is 2 a phenolic donor + H2O2 = 2 a phenolic radical donor + 2 H2O. The protein is Peroxidase A of Aloe vera (Aloe).